Reading from the N-terminus, the 31-residue chain is Zinc metalloproteinase alsophinase (31 aa).

Pyrrolidone carboxylic acid is present on Gln1. Positions 9–31 (KYIEFYLVVDNGMFXKYSXXFTV) constitute a Peptidase M12B domain. Ca(2+) is bound at residue Glu12.

Monomer. The cofactor is Zn(2+). In terms of processing, contains 9 disulfide bonds. Expressed by the venom gland.

It localises to the secreted. Its activity is regulated as follows. Inhibited by 1,10-phenanthroline. Functionally, snake venom zinc metalloprotease that has potent hemorrhagic activity, fibrinogenolytic activity on the alpha-subunit of human fibrinogen (FGA) in vitro and provokes necrosis in skin, muscle and lung tissues. May contribute to local edema and ecchymosis induced by venom. Hydrolyzes model substrate (beta-chain of insulin) at Ala(14)-Leu(15). This Borikenophis portoricensis (Puerto Rican racer) protein is Zinc metalloproteinase alsophinase.